The sequence spans 469 residues: UDP-N-acetylmuramate--L-alanine ligase (469 aa).

113–119 provides a ligand contact to ATP; the sequence is GTHGKTT.

Belongs to the MurCDEF family.

It localises to the cytoplasm. The enzyme catalyses UDP-N-acetyl-alpha-D-muramate + L-alanine + ATP = UDP-N-acetyl-alpha-D-muramoyl-L-alanine + ADP + phosphate + H(+). It participates in cell wall biogenesis; peptidoglycan biosynthesis. In terms of biological role, cell wall formation. This Neisseria meningitidis serogroup A / serotype 4A (strain DSM 15465 / Z2491) protein is UDP-N-acetylmuramate--L-alanine ligase.